The chain runs to 518 residues: Flagellin (518 aa).

The protein belongs to the bacterial flagellin family.

The protein localises to the secreted. Its subcellular location is the bacterial flagellum. Flagellin is the subunit protein which polymerizes to form the filaments of bacterial flagella. This Aquifex aeolicus (strain VF5) protein is Flagellin (flaA).